A 715-amino-acid polypeptide reads, in one-letter code: Coiled-coil domain-containing protein 170 (715 aa).

Coiled-coil stretches lie at residues 30–286, 360–418, and 478–656; these read VTRE…AGQQ, ESRD…LVSG, and ENKT…FREV. Residues 355–591 form a required for binding to microtubules and Golgi apparatus location region; sequence MDSREESRDR…DLNKSRDQLE (237 aa).

As to quaternary structure, binds Golgi-associated microtubules.

Its subcellular location is the golgi apparatus. In terms of biological role, plays a role in Golgi-associated microtubules organization and stabilization. The sequence is that of Coiled-coil domain-containing protein 170 from Homo sapiens (Human).